A 340-amino-acid chain; its full sequence is Ribonucleoside-diphosphate reductase small subunit (340 aa).

Fe cation is bound by residues Asp94, Glu124, and His127. Residue Tyr131 is part of the active site. Residues 180–200 (FILMILIEGIFFAASFAAIAY) traverse the membrane as a helical segment. Residues Glu187, Glu221, and His224 each coordinate Fe cation.

The protein belongs to the ribonucleoside diphosphate reductase small chain family. In terms of assembly, heterotetramer composed of a homodimer of the large subunit (R1) and a homodimer of the small subunit (R2). Larger multisubunit protein complex are also active, composed of (R1)n(R2)n. It depends on Fe cation as a cofactor.

The protein resides in the host membrane. It catalyses the reaction a 2'-deoxyribonucleoside 5'-diphosphate + [thioredoxin]-disulfide + H2O = a ribonucleoside 5'-diphosphate + [thioredoxin]-dithiol. In terms of biological role, ribonucleoside-diphosphate reductase holoenzyme provides the precursors necessary for viral DNA synthesis. Allows virus growth in non-dividing cells, as well as reactivation from latency in infected hosts. Catalyzes the biosynthesis of deoxyribonucleotides from the corresponding ribonucleotides. This Human herpesvirus 1 (strain KOS) (HHV-1) protein is Ribonucleoside-diphosphate reductase small subunit.